The sequence spans 203 residues: CASP-like protein 1B1 (203 aa).

Residues Met-1–Ser-24 are Cytoplasmic-facing. Residues Trp-25–Met-45 form a helical membrane-spanning segment. At Ala-46–Pro-76 the chain is on the extracellular side. The chain crosses the membrane as a helical span at residues Ala-77–Ala-97. Residues Gly-98–Thr-114 are Cytoplasmic-facing. A helical membrane pass occupies residues Val-115 to Phe-135. The Extracellular portion of the chain corresponds to Met-136–Ala-165. Residues Ala-166–Ile-186 traverse the membrane as a helical segment. Topologically, residues Lys-187 to Pro-203 are cytoplasmic.

This sequence belongs to the Casparian strip membrane proteins (CASP) family. As to quaternary structure, homodimer and heterodimers.

It is found in the cell membrane. The protein is CASP-like protein 1B1 of Ricinus communis (Castor bean).